Here is a 303-residue protein sequence, read N- to C-terminus: UDP-3-O-acyl-N-acetylglucosamine deacetylase (303 aa).

3 residues coordinate Zn(2+): histidine 78, histidine 237, and aspartate 241. Catalysis depends on histidine 264, which acts as the Proton donor.

This sequence belongs to the LpxC family. The cofactor is Zn(2+).

The catalysed reaction is a UDP-3-O-[(3R)-3-hydroxyacyl]-N-acetyl-alpha-D-glucosamine + H2O = a UDP-3-O-[(3R)-3-hydroxyacyl]-alpha-D-glucosamine + acetate. It participates in glycolipid biosynthesis; lipid IV(A) biosynthesis; lipid IV(A) from (3R)-3-hydroxytetradecanoyl-[acyl-carrier-protein] and UDP-N-acetyl-alpha-D-glucosamine: step 2/6. In terms of biological role, catalyzes the hydrolysis of UDP-3-O-myristoyl-N-acetylglucosamine to form UDP-3-O-myristoylglucosamine and acetate, the committed step in lipid A biosynthesis. The polypeptide is UDP-3-O-acyl-N-acetylglucosamine deacetylase (Pseudomonas syringae pv. tomato (strain ATCC BAA-871 / DC3000)).